A 225-amino-acid polypeptide reads, in one-letter code: ATP-dependent dethiobiotin synthetase BioD 1 (225 aa).

Mg(2+) contacts are provided by Glu13 and Thr17. Glu13–Val18 provides a ligand contact to ATP. Lys38 is an active-site residue. Ser42 is a binding site for substrate. 2 residues coordinate Mg(2+): Asp55 and Glu116. Residues Asp55, Glu116–Gly119, and Asn176–Asp177 contribute to the ATP site. Tyr188 is a binding site for substrate. Residues Pro205–Leu207 and Glu212 each bind ATP.

The protein belongs to the dethiobiotin synthetase family. In terms of assembly, homodimer. The cofactor is Mg(2+).

The protein localises to the cytoplasm. It catalyses the reaction (7R,8S)-7,8-diammoniononanoate + CO2 + ATP = (4R,5S)-dethiobiotin + ADP + phosphate + 3 H(+). The protein operates within cofactor biosynthesis; biotin biosynthesis; biotin from 7,8-diaminononanoate: step 1/2. Its function is as follows. Catalyzes a mechanistically unusual reaction, the ATP-dependent insertion of CO2 between the N7 and N8 nitrogen atoms of 7,8-diaminopelargonic acid (DAPA, also called 7,8-diammoniononanoate) to form a ureido ring. Only CTP can partially replace ATP while diaminobiotin is only 37% as effective as 7,8-diaminopelargonic acid. In another study both CTP and GTP (but not ITP, TTP or UTP) can partially replace ATP. The polypeptide is ATP-dependent dethiobiotin synthetase BioD 1 (Escherichia coli (strain K12)).